The following is a 478-amino-acid chain: Lipoprotein lipase (478 aa).

The first 27 residues, Met-1–Ala-27, serve as a signal peptide directing secretion. Residues Lys-35–Thr-56 form an interaction with GPIHBP1 region. Cysteines 57 and 70 form a disulfide. Asn-73 carries an N-linked (GlcNAc...) asparagine glycan. The residue at position 124 (Tyr-124) is a 3'-nitrotyrosine. Ser-162 serves as the catalytic Nucleophile. Asp-186 serves as the catalytic Charge relay system. Tyr-194 carries the 3'-nitrotyrosine modification. Positions 197, 200, 202, and 205 each coordinate Ca(2+). An intrachain disulfide couples Cys-246 to Cys-269. The interval Cys-246–Cys-269 is essential for determining substrate specificity. The active-site Charge relay system is the His-271. Cystine bridges form between Cys-294–Cys-313 and Cys-305–Cys-308. The region spanning Phe-344–Lys-467 is the PLAT domain. Tyr-346 bears the 3'-nitrotyrosine mark. The N-linked (GlcNAc...) asparagine glycan is linked to Asn-389. The important for interaction with lipoprotein particles stretch occupies residues Trp-420–Trp-424. Residues Lys-433–Lys-437 form an important for heparin binding region. An interaction with GPIHBP1 region spans residues Ile-446–Asp-470. Cys-448 and Cys-468 are disulfide-bonded.

This sequence belongs to the AB hydrolase superfamily. Lipase family. In terms of assembly, homodimer. Interacts with GPIHBP1 with 1:1 stoichiometry. Interacts with APOC2; the interaction activates LPL activity in the presence of lipids. Interaction with heparan sulfate proteoglycans is required to protect LPL against loss of activity. Associates with lipoprotein particles in blood plasma. Interacts with LMF1 and SEL1L; interaction with SEL1L is required to prevent aggregation of newly synthesized LPL in the endoplasmic reticulum (ER), and for normal export of LPL from the ER to the extracellular space. Interacts with SORL1; SORL1 acts as a sorting receptor, promoting LPL localization to endosomes and later to lysosomes, leading to degradation of newly synthesized LPL. In terms of processing, tyrosine nitration after lipopolysaccharide (LPS) challenge down-regulates the lipase activity.

Its subcellular location is the cell membrane. It is found in the secreted. It localises to the extracellular space. The protein localises to the extracellular matrix. The catalysed reaction is a triacylglycerol + H2O = a diacylglycerol + a fatty acid + H(+). The enzyme catalyses a 1,2-diacyl-sn-glycero-3-phosphocholine + H2O = a 2-acyl-sn-glycero-3-phosphocholine + a fatty acid + H(+). It catalyses the reaction 1,2,3-tri-(9Z-octadecenoyl)-glycerol + H2O = di-(9Z)-octadecenoylglycerol + (9Z)-octadecenoate + H(+). It carries out the reaction 1,2-di-(9Z-octadecenoyl)-sn-glycero-3-phosphocholine + H2O = (9Z-octadecenoyl)-sn-glycero-3-phosphocholine + (9Z)-octadecenoate + H(+). The catalysed reaction is 1,2,3-tributanoylglycerol + H2O = dibutanoylglycerol + butanoate + H(+). The enzyme catalyses 1,2-dihexadecanoyl-sn-glycero-3-phosphocholine + H2O = hexadecanoyl-sn-glycero-3-phosphocholine + hexadecanoate + H(+). With respect to regulation, the apolipoprotein APOC2 acts as a coactivator of LPL activity. Ca(2+) binding promotes protein stability and formation of the active homodimer. Interaction with GPIHBP1 protects LPL against inactivation by ANGPTL4. Its function is as follows. Key enzyme in triglyceride metabolism. Catalyzes the hydrolysis of triglycerides from circulating chylomicrons and very low density lipoproteins (VLDL), and thereby plays an important role in lipid clearance from the blood stream, lipid utilization and storage. Although it has both phospholipase and triglyceride lipase activities it is primarily a triglyceride lipase with low but detectable phospholipase activity. Mediates margination of triglyceride-rich lipoprotein particles in capillaries. Recruited to its site of action on the luminal surface of vascular endothelium by binding to GPIHBP1 and cell surface heparan sulfate proteoglycans. This Ovis aries (Sheep) protein is Lipoprotein lipase (LPL).